A 336-amino-acid chain; its full sequence is Speedy protein E1 (336 aa).

The tract at residues 16-50 (GVDPSPPCRSLGWKRKREWSDESEEEPEKELAPEP) is disordered. Residues 36–50 (DESEEEPEKELAPEP) are compositionally biased toward acidic residues.

It belongs to the Speedy/Ringo family. As to expression, predominantly expressed in testis and heart.

This is Speedy protein E1 from Homo sapiens (Human).